A 208-amino-acid chain; its full sequence is Protein GrpE (208 aa).

Residues M1–A25 show a composition bias toward basic and acidic residues. The disordered stretch occupies residues M1–S38. Over residues N29–S38 the composition is skewed to acidic residues.

It belongs to the GrpE family. As to quaternary structure, homodimer.

It is found in the cytoplasm. Its function is as follows. Participates actively in the response to hyperosmotic and heat shock by preventing the aggregation of stress-denatured proteins, in association with DnaK and GrpE. It is the nucleotide exchange factor for DnaK and may function as a thermosensor. Unfolded proteins bind initially to DnaJ; upon interaction with the DnaJ-bound protein, DnaK hydrolyzes its bound ATP, resulting in the formation of a stable complex. GrpE releases ADP from DnaK; ATP binding to DnaK triggers the release of the substrate protein, thus completing the reaction cycle. Several rounds of ATP-dependent interactions between DnaJ, DnaK and GrpE are required for fully efficient folding. This chain is Protein GrpE, found in Clostridium perfringens (strain 13 / Type A).